The following is a 332-amino-acid chain: Protein FAM131B (332 aa).

Residues 1–22 (MDSTSSLHGSSLHRPSTEQTRT) are disordered. S47 carries the phosphoserine modification. The interval 95–114 (PTIQPQHSHEAVRRDTDAYS) is disordered. Residues 101–111 (HSHEAVRRDTD) are compositionally biased toward basic and acidic residues. Phosphoserine occurs at positions 114 and 117. Positions 221-332 (LGPAFDDSQP…FDEEEGDANN (112 aa)) are disordered. 2 stretches are compositionally biased toward basic and acidic residues: residues 272 to 281 (PVEEEKRPLA) and 288 to 302 (AGCRDLESLSPREDP). Residues S295, S297, and S313 each carry the phosphoserine modification. At T316 the chain carries Phosphothreonine. S317, S318, and S322 each carry phosphoserine. Residues 323–332 (FDEEEGDANN) show a composition bias toward acidic residues.

Belongs to the FAM131 family.

The polypeptide is Protein FAM131B (Fam131b) (Mus musculus (Mouse)).